Here is a 383-residue protein sequence, read N- to C-terminus: Aurachin C monooxygenase/isomerase (383 aa).

Residues Gly15, Ser47, Val128, Asp285, and 295 to 299 (GQGGC) each bind FAD.

The cofactor is FAD.

The enzyme catalyses aurachin C + NADH + O2 + H(+) = 4-hydroxy-2-methyl-3-oxo-4-[(2E,6E)-farnesyl]-3,4-dihydroquinoline 1-oxide + NAD(+) + H2O. It catalyses the reaction aurachin C + NADPH + O2 + H(+) = 4-hydroxy-2-methyl-3-oxo-4-[(2E,6E)-farnesyl]-3,4-dihydroquinoline 1-oxide + NADP(+) + H2O. The catalysed reaction is aurachin C + NADH + O2 + H(+) = aurachin C epoxide + NAD(+) + H2O. It carries out the reaction aurachin C + NADPH + O2 + H(+) = aurachin C epoxide + NADP(+) + H2O. The enzyme catalyses aurachin C epoxide = 2-hydroxy-1a-methyl-7a-[(2E,6E)-farnesyl]-1a,2-dihydrooxireno[2,3-b]quinolin-7(7aH)-one. It catalyses the reaction 2-hydroxy-1a-methyl-7a-[(2E,6E)-farnesyl]-1a,2-dihydrooxireno[2,3-b]quinolin-7(7aH)-one = 4-hydroxy-2-methyl-3-oxo-4-[(2E,6E)-farnesyl]-3,4-dihydroquinoline 1-oxide. Catalyzes the initial step in the conversion of aurachin C to aurachin B. Catalyzes the epoxidation of the C(2)-C(3) double bond of aurachin C, which is followed by a semipinacol rearrangement, causing migration of the farnesyl group from C(3) to C(4). Accepts both NADH and NADPH, but has a preference for NADH. The protein is Aurachin C monooxygenase/isomerase of Stigmatella aurantiaca.